The primary structure comprises 928 residues: Eukaryotic translation initiation factor 3 subunit C (928 aa).

Disordered regions lie at residues 1 to 37 (MSRFFANGSDSESESSEEEVPTQFNNKAQNFQFSDDE) and 157 to 286 (FREA…EDGE). Acidic residues predominate over residues 11-20 (SESESSEEEV). A compositionally biased stretch (polar residues) spans 22 to 33 (TQFNNKAQNFQF). Phosphoserine occurs at positions 34, 165, 177, and 186. Residues 162 to 171 (DQESDVDEGE) are compositionally biased toward acidic residues. Residues 172-184 (GDVHDSDADRAGD) are compositionally biased toward basic and acidic residues. Acidic residues predominate over residues 215–240 (DDDDSEDSIDWDPDTESETESSEDEN). Basic and acidic residues predominate over residues 245 to 264 (MRERFLKRTTEKEDKDDDKR). Over residues 265–277 (KDKRKEQKHKVRK) the composition is skewed to basic residues. Positions 656–832 (FHMHINLELL…ETVVMHRSEP (177 aa)) constitute a PCI domain. The disordered stretch occupies residues 864 to 928 (FFQRGNMGNR…QQQVHTIDEE (65 aa)). Residues 898–909 (QRNRNQRGHHKQ) show a composition bias toward basic residues. The segment covering 910–921 (NQQQNQQQQQQQ) has biased composition (low complexity).

The protein belongs to the eIF-3 subunit C family. Component of the eukaryotic translation initiation factor 3 (eIF-3) complex. The eIF-3 complex interacts with pix.

It is found in the cytoplasm. Its function is as follows. Component of the eukaryotic translation initiation factor 3 (eIF-3) complex, which is involved in protein synthesis of a specialized repertoire of mRNAs and, together with other initiation factors, stimulates binding of mRNA and methionyl-tRNAi to the 40S ribosome. The eIF-3 complex specifically targets and initiates translation of a subset of mRNAs involved in cell proliferation. This Drosophila grimshawi (Hawaiian fruit fly) protein is Eukaryotic translation initiation factor 3 subunit C.